A 395-amino-acid chain; its full sequence is tRNA-specific 2-thiouridylase MnmA (395 aa).

ATP is bound by residues 7-14 and Met33; that span reads GLSGGVDS. The interval 95–97 is interaction with target base in tRNA; that stretch reads NPD. Catalysis depends on Cys100, which acts as the Nucleophile. A disulfide bond links Cys100 and Cys200. Gly124 contributes to the ATP binding site. The interaction with tRNA stretch occupies residues 150-152; that stretch reads KDQ. The Cysteine persulfide intermediate role is filled by Cys200. The segment at 346-347 is interaction with tRNA; sequence RY.

Belongs to the MnmA/TRMU family.

It localises to the cytoplasm. The catalysed reaction is S-sulfanyl-L-cysteinyl-[protein] + uridine(34) in tRNA + AH2 + ATP = 2-thiouridine(34) in tRNA + L-cysteinyl-[protein] + A + AMP + diphosphate + H(+). In terms of biological role, catalyzes the 2-thiolation of uridine at the wobble position (U34) of tRNA, leading to the formation of s(2)U34. The protein is tRNA-specific 2-thiouridylase MnmA of Flavobacterium johnsoniae (strain ATCC 17061 / DSM 2064 / JCM 8514 / BCRC 14874 / CCUG 350202 / NBRC 14942 / NCIMB 11054 / UW101) (Cytophaga johnsonae).